Reading from the N-terminus, the 293-residue chain is MPSTPTLIFIIIFYLVSLASMLQNGFMMIVLGREWMRNRTLPAADMIVASLASSRFCLHGIAILANLLASFDFCYQANLIGILWDFTNTLIFWLTAWLAIFYCVKISSFSHPVLFWLKWRISQLVPRLLVVSLIIGGLSAVISATGNFMANQMTISQGFHGNCTFGHMSLDFYRYYYLYHSVLMWFTPFFLFLVSVIVLMFSLYQHVEKMRGHRPGPWDLHTQAHTMALKSLTFFFIFYIFFFLALVISSTKRKSMQSYYWAREAIIYTGIFLNSIILLFSNPKLRKALKMRF.

Residues Met-1–Thr-6 lie on the Extracellular side of the membrane. Residues Leu-7 to Met-27 traverse the membrane as a helical segment. The Cytoplasmic segment spans residues Met-28–Arg-55. The chain crosses the membrane as a helical span at residues Phe-56–Gln-76. Residues Ala-77–Leu-79 are Extracellular-facing. A helical membrane pass occupies residues Ile-80–Ile-100. Residues Phe-101 to Arg-127 lie on the Cytoplasmic side of the membrane. Residues Leu-128 to Phe-148 form a helical membrane-spanning segment. The Extracellular segment spans residues Met-149 to Ser-181. N-linked (GlcNAc...) asparagine glycosylation occurs at Asn-162. The chain crosses the membrane as a helical span at residues Val-182–Ser-202. The Cytoplasmic segment spans residues Leu-203–Met-227. The helical transmembrane segment at Ala-228–Ile-248 threads the bilayer. Topologically, residues Ser-249–Glu-264 are extracellular. The chain crosses the membrane as a helical span at residues Ala-265 to Leu-285. The Cytoplasmic segment spans residues Arg-286–Phe-293.

The protein belongs to the G-protein coupled receptor T2R family.

Its subcellular location is the membrane. In terms of biological role, putative taste receptor which may play a role in the perception of bitterness. In Mus musculus (Mouse), this protein is Taste receptor type 2 member 143 (Tas2r143).